The following is a 59-amino-acid chain: Large ribosomal subunit protein uL30 (59 aa).

Belongs to the universal ribosomal protein uL30 family. As to quaternary structure, part of the 50S ribosomal subunit.

The chain is Large ribosomal subunit protein uL30 from Clostridium botulinum (strain ATCC 19397 / Type A).